A 198-amino-acid chain; its full sequence is MSSRGHSTLPRTLMAPRMISEGDIGGIAQITSSLFLGRASVASNWHLLQARGITCVINATIEIPNFNWPQFEYVKVPLADIPHAPIRLYFDTVADKIHSVSKKHGATLVHCAAGVSRSATLCIAYLMKFHNLCLLEAYNWVKARRPVIRPNLGFWRQLIDYESQLFGKSSVKMVQTPYGIIPDVYEKESRHLMPYWGI.

One can recognise a Tyrosine-protein phosphatase domain in the interval 26 to 167 (GIAQITSSLF…LIDYESQLFG (142 aa)). The Phosphocysteine intermediate role is filled by cysteine 111.

This sequence belongs to the protein-tyrosine phosphatase family. Non-receptor class dual specificity subfamily.

It carries out the reaction O-phospho-L-tyrosyl-[protein] + H2O = L-tyrosyl-[protein] + phosphate. The catalysed reaction is O-phospho-L-seryl-[protein] + H2O = L-seryl-[protein] + phosphate. It catalyses the reaction O-phospho-L-threonyl-[protein] + H2O = L-threonyl-[protein] + phosphate. In terms of biological role, involved in the inactivation of MAP kinases. Dephosphorylates ERK, JNK and p38 MAP-kinases. Plays a negative role in TCR signaling by dephosphorylating MAP3K7 adapter TAB1 leading to its inactivation. The protein is Dual specificity protein phosphatase 14 (Dusp14) of Mus musculus (Mouse).